A 436-amino-acid polypeptide reads, in one-letter code: MVNLESMHTDIKMSGDVADSTDARSTLSQVEPGNDRNGLDFNRQIKTEDLSDSLQQTLSHRPCHLSQGPAMMSGNQMSGLNASPCQDMASLHPLQQLVLVPGHLQSVSQFLLSQTQPGQQGLQPNLLPFPQQQSGLLLPQTGPGLASQAFGHPGLPGSSLEPHLEASQHLPVPKHLPSSGGADEPSDLEELEKFAKTFKQRRIKLGFTQGDVGLAMGKLYGNDFSQTTISRFEALNLSFKNMCKLKPLLEKWLNDAESSPSDPSVSTPSSYPSLSEVFGRKRKKRTSIETNIRLTLEKRFQDNPKPSSEEISMIAEQLSMEKEVVRVWFCNRRQKEKRINCPVATPIKPPVYNSRLVSPSGSLGPLSVPPVHSTMPGTVTSSCSPGNNSRPSSPGSGLHASSPTASQNNSKAAVNSASSFNSSGSWYRWNHSTYLH.

Disordered regions lie at residues 1–40 (MVNL…NGLD), 140–186 (QTGP…DEPS), and 256–278 (AESS…SEVF). The region spanning 183–257 (DEPSDLEELE…LLEKWLNDAE (75 aa)) is the POU-specific domain. The span at 258 to 275 (SSPSDPSVSTPSSYPSLS) shows a compositional bias: low complexity. Positions 281-340 (KRKKRTSIETNIRLTLEKRFQDNPKPSSEEISMIAEQLSMEKEVVRVWFCNRRQKEKRIN) form a DNA-binding region, homeobox. The interval 363–421 (LGPLSVPPVHSTMPGTVTSSCSPGNNSRPSSPGSGLHASSPTASQNNSKAAVNSASSFN) is disordered. Low complexity-rich tracts occupy residues 381 to 397 (SSCS…PGSG) and 405 to 421 (ASQN…SSFN).

The protein belongs to the POU transcription factor family. Class-2 subfamily. As to quaternary structure, interacts (via the POU domain) with POU2AF1 and POU2AF2 in a DNA-dependent manner; this interaction recruits POU2AF2 to chromatin and increases POU2F3 transactivation activity. In terms of tissue distribution, specifically expressed in epidermis and cultured keratinocytes.

It localises to the nucleus. Transcription factor that binds to the octamer motif (5'-ATTTGCAT-3') and regulates cell type-specific differentiation pathways. Involved in the regulation of keratinocytes differentiation. The POU2F3-POU2AF2/POU2AF3 complex drives the expression of tuft-cell-specific genes, a rare chemosensory cells that coordinate immune and neural functions within mucosal epithelial tissues. This Homo sapiens (Human) protein is POU domain, class 2, transcription factor 3.